We begin with the raw amino-acid sequence, 223 residues long: Crossover junction endodeoxyribonuclease RuvC (223 aa).

Residues D12, E73, and D146 contribute to the active site. Mg(2+) contacts are provided by D12, E73, and D146. The interval Q182 to R223 is disordered. Residues S190–G202 are compositionally biased toward polar residues. Basic and acidic residues predominate over residues Q213–R223.

It belongs to the RuvC family. Homodimer which binds Holliday junction (HJ) DNA. The HJ becomes 2-fold symmetrical on binding to RuvC with unstacked arms; it has a different conformation from HJ DNA in complex with RuvA. In the full resolvosome a probable DNA-RuvA(4)-RuvB(12)-RuvC(2) complex forms which resolves the HJ. It depends on Mg(2+) as a cofactor.

Its subcellular location is the cytoplasm. It catalyses the reaction Endonucleolytic cleavage at a junction such as a reciprocal single-stranded crossover between two homologous DNA duplexes (Holliday junction).. Its function is as follows. The RuvA-RuvB-RuvC complex processes Holliday junction (HJ) DNA during genetic recombination and DNA repair. Endonuclease that resolves HJ intermediates. Cleaves cruciform DNA by making single-stranded nicks across the HJ at symmetrical positions within the homologous arms, yielding a 5'-phosphate and a 3'-hydroxyl group; requires a central core of homology in the junction. The consensus cleavage sequence is 5'-(A/T)TT(C/G)-3'. Cleavage occurs on the 3'-side of the TT dinucleotide at the point of strand exchange. HJ branch migration catalyzed by RuvA-RuvB allows RuvC to scan DNA until it finds its consensus sequence, where it cleaves and resolves the cruciform DNA. This is Crossover junction endodeoxyribonuclease RuvC from Corynebacterium efficiens (strain DSM 44549 / YS-314 / AJ 12310 / JCM 11189 / NBRC 100395).